Reading from the N-terminus, the 514-residue chain is tRNA-2-methylthio-N(6)-dimethylallyladenosine synthase (514 aa).

One can recognise an MTTase N-terminal domain in the interval 68–186 (RTFLIKTYGC…LPEILEEAYL (119 aa)). 6 residues coordinate [4Fe-4S] cluster: Cys77, Cys113, Cys147, Cys223, Cys227, and Cys230. The 231-residue stretch at 209 to 439 (REGSTKAWVN…NKKVGHYSEK (231 aa)) folds into the Radical SAM core domain. Residues 442–505 (NQYEGKTVTV…QYSLNGTFKE (64 aa)) enclose the TRAM domain.

The protein belongs to the methylthiotransferase family. MiaB subfamily. As to quaternary structure, monomer. [4Fe-4S] cluster serves as cofactor.

Its subcellular location is the cytoplasm. It catalyses the reaction N(6)-dimethylallyladenosine(37) in tRNA + (sulfur carrier)-SH + AH2 + 2 S-adenosyl-L-methionine = 2-methylsulfanyl-N(6)-dimethylallyladenosine(37) in tRNA + (sulfur carrier)-H + 5'-deoxyadenosine + L-methionine + A + S-adenosyl-L-homocysteine + 2 H(+). Catalyzes the methylthiolation of N6-(dimethylallyl)adenosine (i(6)A), leading to the formation of 2-methylthio-N6-(dimethylallyl)adenosine (ms(2)i(6)A) at position 37 in tRNAs that read codons beginning with uridine. The protein is tRNA-2-methylthio-N(6)-dimethylallyladenosine synthase of Staphylococcus haemolyticus (strain JCSC1435).